A 36-amino-acid chain; its full sequence is Photosystem II reaction center protein M (36 aa).

A helical transmembrane segment spans residues 5–25 (ILGVIATALFIIIPTSFLLIL).

Belongs to the PsbM family. As to quaternary structure, PSII is composed of 1 copy each of membrane proteins PsbA, PsbB, PsbC, PsbD, PsbE, PsbF, PsbH, PsbI, PsbJ, PsbK, PsbL, PsbM, PsbT, PsbX, PsbY, PsbZ, Psb30/Ycf12, at least 3 peripheral proteins of the oxygen-evolving complex and a large number of cofactors. It forms dimeric complexes.

It localises to the plastid. It is found in the chloroplast thylakoid membrane. Functionally, one of the components of the core complex of photosystem II (PSII). PSII is a light-driven water:plastoquinone oxidoreductase that uses light energy to abstract electrons from H(2)O, generating O(2) and a proton gradient subsequently used for ATP formation. It consists of a core antenna complex that captures photons, and an electron transfer chain that converts photonic excitation into a charge separation. This subunit is found at the monomer-monomer interface. This chain is Photosystem II reaction center protein M, found in Chlorella vulgaris (Green alga).